Consider the following 208-residue polypeptide: Small ribosomal subunit protein eS8 (208 aa).

Positions 1-23 (MGISRDSAHKRRATGGKRKSLRK) are disordered. The span at 8 to 23 (AHKRRATGGKRKSLRK) shows a compositional bias: basic residues.

It belongs to the eukaryotic ribosomal protein eS8 family. As to quaternary structure, component of the small ribosomal subunit. Identified in a IGF2BP1-dependent mRNP granule complex containing untranslated mRNAs. Part of the small subunit (SSU) processome, composed of more than 70 proteins and the RNA chaperone small nucleolar RNA (snoRNA) U3.

The protein localises to the cytoplasm. It is found in the membrane. It localises to the nucleus. The protein resides in the nucleolus. Its function is as follows. Component of the small ribosomal subunit. The ribosome is a large ribonucleoprotein complex responsible for the synthesis of proteins in the cell. Part of the small subunit (SSU) processome, first precursor of the small eukaryotic ribosomal subunit. During the assembly of the SSU processome in the nucleolus, many ribosome biogenesis factors, an RNA chaperone and ribosomal proteins associate with the nascent pre-rRNA and work in concert to generate RNA folding, modifications, rearrangements and cleavage as well as targeted degradation of pre-ribosomal RNA by the RNA exosome. This Drosophila melanogaster (Fruit fly) protein is Small ribosomal subunit protein eS8 (RpS8).